A 400-amino-acid chain; its full sequence is 1-deoxy-D-xylulose 5-phosphate reductoisomerase (400 aa).

NADPH contacts are provided by threonine 10, glycine 11, serine 12, isoleucine 13, glycine 36, asparagine 38, and asparagine 124. Residue lysine 125 participates in 1-deoxy-D-xylulose 5-phosphate binding. Glutamate 126 is an NADPH binding site. Residue aspartate 150 participates in Mn(2+) binding. Serine 151, glutamate 152, serine 186, and histidine 209 together coordinate 1-deoxy-D-xylulose 5-phosphate. Glutamate 152 is a Mn(2+) binding site. Glycine 215 contributes to the NADPH binding site. 1-deoxy-D-xylulose 5-phosphate contacts are provided by serine 222, asparagine 227, lysine 228, and glutamate 231. Position 231 (glutamate 231) interacts with Mn(2+).

This sequence belongs to the DXR family. Requires Mg(2+) as cofactor. The cofactor is Mn(2+).

It carries out the reaction 2-C-methyl-D-erythritol 4-phosphate + NADP(+) = 1-deoxy-D-xylulose 5-phosphate + NADPH + H(+). Its pathway is isoprenoid biosynthesis; isopentenyl diphosphate biosynthesis via DXP pathway; isopentenyl diphosphate from 1-deoxy-D-xylulose 5-phosphate: step 1/6. Catalyzes the NADPH-dependent rearrangement and reduction of 1-deoxy-D-xylulose-5-phosphate (DXP) to 2-C-methyl-D-erythritol 4-phosphate (MEP). This chain is 1-deoxy-D-xylulose 5-phosphate reductoisomerase, found in Aliivibrio salmonicida (strain LFI1238) (Vibrio salmonicida (strain LFI1238)).